Here is a 680-residue protein sequence, read N- to C-terminus: Cytosolic endo-beta-N-acetylglucosaminidase 1 (680 aa).

The span at 1-15 shows a compositional bias: pro residues; it reads MSVAPPAPSPPPFDP. A disordered region spans residues 1-21; that stretch reads MSVAPPAPSPPPFDPTKPSTP.

Belongs to the glycosyl hydrolase 85 family.

It localises to the cytoplasm. It is found in the cytosol. The enzyme catalyses an N(4)-(oligosaccharide-(1-&gt;3)-[oligosaccharide-(1-&gt;6)]-beta-D-Man-(1-&gt;4)-beta-D-GlcNAc-(1-&gt;4)-alpha-D-GlcNAc)-L-asparaginyl-[protein] + H2O = an oligosaccharide-(1-&gt;3)-[oligosaccharide-(1-&gt;6)]-beta-D-Man-(1-&gt;4)-D-GlcNAc + N(4)-(N-acetyl-beta-D-glucosaminyl)-L-asparaginyl-[protein]. Endoglycosidase that releases N-glycans from glycoproteins by cleaving the beta-1,4-glycosidic bond in the N,N'-diacetylchitobiose core. Involved in the production of high-mannose type N-glycans during plant development and fruit maturation. In Arabidopsis thaliana (Mouse-ear cress), this protein is Cytosolic endo-beta-N-acetylglucosaminidase 1.